The following is a 235-amino-acid chain: Transmembrane emp24 domain-containing protein 9 (235 aa).

The signal sequence occupies residues Met1 to Ala37. Over Leu38–Arg202 the chain is Lumenal. Positions Lys47 to Val145 constitute a GOLD domain. Residues Cys121 to Lys160 form a required for interaction with STX17 region. Asn125 carries an N-linked (GlcNAc...) asparagine glycan. Positions Glu154–Tyr184 form a coiled coil. An N6-acetyllysine modification is found at Lys160. The chain crosses the membrane as a helical span at residues Val203–Met222. Topologically, residues Arg223 to Val235 are cytoplasmic. Residues Phe228–Phe229 carry the COPII vesicle coat-binding motif. The short motif at Phe228 to Val235 is the COPI vesicle coat-binding element.

Belongs to the EMP24/GP25L family. As to quaternary structure, monomer and homodimer in endoplasmic reticulum. Predominantly monomeric and to lesser extent homodimeric in endoplasmic reticulum-Golgi intermediate compartment and cis-Golgi network. Probably oligomerizes with other members of the EMP24/GP25L family such as TMED2, TMED7 and TMED10. Interacts with TMED5. Interacts (via C-terminus) with COPG1; the interaction involves dimeric TMED9. Interacts with PTPN2 and SPAST. Interacts with STX17; the interaction is direct. In terms of processing, N-linked glycosylated containing high mannose.

The protein localises to the endoplasmic reticulum membrane. It is found in the golgi apparatus. The protein resides in the cis-Golgi network membrane. It localises to the endoplasmic reticulum-Golgi intermediate compartment membrane. Its subcellular location is the trans-Golgi network membrane. Functionally, appears to be involved in vesicular protein trafficking, mainly in the early secretory pathway. In COPI vesicle-mediated retrograde transport involved in the coatomer recruitment to membranes of the early secretory pathway. Increases coatomer-dependent activity of ARFGAP2. Thought to play a crucial role in the specific retention of p24 complexes in cis-Golgi membranes; specifically contributes to the coupled localization of TMED2 and TMED10 in the cis-Golgi network. May be involved in organization of intracellular membranes, such as of the ER-Golgi intermediate compartment and the Golgi apparatus. Involved in ER localization of PTPN2. The sequence is that of Transmembrane emp24 domain-containing protein 9 (Tmed9) from Rattus norvegicus (Rat).